We begin with the raw amino-acid sequence, 478 residues long: Protein FAM83E (478 aa).

The tract at residues methionine 1–proline 293 is DUF1669. Disordered stretches follow at residues proline 292 to histidine 334, arginine 359 to alanine 436, and aspartate 452 to proline 478. Residues arginine 309–serine 319 show a composition bias toward basic residues. Over residues arginine 379–aspartate 388 the composition is skewed to polar residues.

The protein belongs to the FAM83 family. As to quaternary structure, directly interacts (via DUF1669) with CSNK1A1, CSNK1A1L, CSNK1D and CSNK1E. May interact with RAF1.

It localises to the cytoplasm. It is found in the perinuclear region. In terms of biological role, may play a role in MAPK signaling. In Homo sapiens (Human), this protein is Protein FAM83E.